A 423-amino-acid polypeptide reads, in one-letter code: Gamma-glutamyl phosphate reductase (423 aa).

This sequence belongs to the gamma-glutamyl phosphate reductase family.

It localises to the cytoplasm. The catalysed reaction is L-glutamate 5-semialdehyde + phosphate + NADP(+) = L-glutamyl 5-phosphate + NADPH + H(+). It functions in the pathway amino-acid biosynthesis; L-proline biosynthesis; L-glutamate 5-semialdehyde from L-glutamate: step 2/2. Functionally, catalyzes the NADPH-dependent reduction of L-glutamate 5-phosphate into L-glutamate 5-semialdehyde and phosphate. The product spontaneously undergoes cyclization to form 1-pyrroline-5-carboxylate. The sequence is that of Gamma-glutamyl phosphate reductase from Paramagnetospirillum magneticum (strain ATCC 700264 / AMB-1) (Magnetospirillum magneticum).